We begin with the raw amino-acid sequence, 399 residues long: Inositol polyphosphate 1-phosphatase (399 aa).

Asp54 provides a ligand contact to Li(+). Residue Glu79 coordinates Mg(2+). Glu80 contributes to the Li(+) binding site. Mg(2+)-binding residues include Asp153 and Ile155. 1D-myo-inositol 1,4-bisphosphate contacts are provided by Asp156, Ser157, Thr158, Ser267, Lys269, Gly289, Ala290, Lys293, and Thr311. Asp316 is a binding site for Mg(2+). At Ser317 the chain carries Phosphoserine.

The protein belongs to the inositol monophosphatase superfamily. In terms of assembly, monomer. It depends on Mg(2+) as a cofactor. In terms of tissue distribution, ubiquitously expressed, with highest levels in pancreas and kidney.

The catalysed reaction is 1D-myo-inositol 1,4-bisphosphate + H2O = 1D-myo-inositol 4-phosphate + phosphate. The enzyme catalyses 1D-myo-inositol 1,3,4-trisphosphate + H2O = 1D-myo-inositol 3,4-bisphosphate + phosphate. It functions in the pathway signal transduction; phosphatidylinositol signaling pathway. Inhibited by Li(+). Mg(2+)-dependent phosphatase that catalyzes the hydrolysis of the 1-position phosphate from inositol 1,4-bisphosphate and inositol 1,3,4-trisphosphate and participates in inositol phosphate metabolism. The chain is Inositol polyphosphate 1-phosphatase from Homo sapiens (Human).